The chain runs to 830 residues: Frameshifted structural polyprotein (830 aa).

The interval 58 to 109 (AIAPARPPKPKKKKTTKPKPKTQPKKINGKTQQQKKKDKQADKKKKKPGKRE) is disordered. Over residues 65-107 (PKPKKKKTTKPKPKTQPKKINGKTQQQKKKDKQADKKKKKPGK) the composition is skewed to basic residues. Residues 94–106 (KDKQADKKKKKPG) form a ribosome-binding region. Cysteine 119 and cysteine 134 are oxidised to a cystine. One can recognise a Peptidase S3 domain in the interval 119–267 (CIFEVKHEGK…RVTPEGSEEW (149 aa)). Residues histidine 145, aspartate 167, and serine 219 each act as charge relay system in the active site. Asparagine 280, asparagine 327, asparagine 533, and asparagine 595 each carry an N-linked (GlcNAc...) asparagine; by host glycan. The chain crosses the membrane as a helical span at residues 702 to 722 (AVVGMSLLALISIFASCYMLV). Residues cysteine 718, cysteine 728, cysteine 748, and cysteine 749 are each lipidated (S-palmitoyl cysteine; by host). Positions 728–748 (CLTPYALTPGAAVPWTLGILC) are transient transmembrane before p62-6K protein processing. A run of 2 helical transmembrane segments spans residues 771 to 791 (ALFW…TYCL) and 793 to 813 (NVLC…RGHR).

As to quaternary structure, homodimer. Homomultimer. Interacts with host karyopherin KPNA4; this interaction allows the nuclear import of the viral capsid protein. Precursor of protein E3/E2: The precursor of protein E3/E2 and E1 form a heterodimer shortly after synthesis. Interacts with host IRAK1; the interaction leads to inhibition of IRAK1-dependent signaling. Processing of the precursor of protein E3/E2 into E2 and E3 results in a heterodimer of the spike glycoproteins E2 and E1. Spike at virion surface are constituted of three E2-E1 heterodimers. Interacts with 6K protein. Interacts with host MXRA8; this interaction mediates virus entry. In terms of processing, specific enzymatic cleavages in vivo yield mature proteins. Capsid protein is auto-cleaved during polyprotein translation, unmasking a signal peptide at the N-terminus of the precursor of E3/E2. The remaining polyprotein is then targeted to the host endoplasmic reticulum, where host signal peptidase cleaves it into pE2 and TF. pE2 is further processed to mature E3 and E2 by host furin in trans-Golgi vesicle.

It localises to the virion. It is found in the host cytoplasm. Its subcellular location is the host cell membrane. The protein localises to the host nucleus. The protein resides in the virion membrane. The catalysed reaction is Autocatalytic release of the core protein from the N-terminus of the togavirus structural polyprotein by hydrolysis of a -Trp-|-Ser- bond.. Its function is as follows. Forms an icosahedral capsid with a T=4 symmetry composed of 240 copies of the capsid protein surrounded by a lipid membrane through which penetrate 80 spikes composed of trimers of E1-E2 heterodimers. The capsid protein binds to the viral RNA genome at a site adjacent to a ribosome binding site for viral genome translation following genome release. Possesses a protease activity that results in its autocatalytic cleavage from the nascent structural protein. Following its self-cleavage, the capsid protein transiently associates with ribosomes, and within several minutes the protein binds to viral RNA and rapidly assembles into icosahedric core particles. The resulting nucleocapsid eventually associates with the cytoplasmic domain of the spike glycoprotein E2 at the cell membrane, leading to budding and formation of mature virions. In case of infection, new virions attach to target cells and after clathrin-mediated endocytosis their membrane fuses with the host endosomal membrane. This leads to the release of the nucleocapsid into the cytoplasm, followed by an uncoating event necessary for the genomic RNA to become accessible. The uncoating might be triggered by the interaction of capsid proteins with ribosomes. Binding of ribosomes would release the genomic RNA since the same region is genomic RNA-binding and ribosome-binding. Specifically inhibits interleukin-1 receptor-associated kinase 1/IRAK1-dependent signaling during viral entry, representing a means by which the alphaviruses may evade innate immune detection and activation prior to viral gene expression. Provides the signal sequence for p62 (E3/E2) translocation to the host endoplasmic reticulum. Mediates pH protection of E1 during secretory pathway trans- port. Functionally, plays a role in viral attachment to target host cell, by binding to the cell receptor. Synthesized as a p62 precursor which is processed by furin at the cell membrane just before virion budding, giving rise to E2-E1 heterodimer. The p62-E1 heterodimer is stable, whereas E2-E1 is unstable and dissociate at low pH. p62 is processed at the last step, presumably to avoid E1 fusion activation before its final export to cell surface. E2 C-terminus contains a transitory transmembrane that would be disrupted by palmitoylation, resulting in reorientation of the C-terminal tail from lumenal to cytoplasmic side. This step is critical since E2 C-terminus is involved in budding by interacting with capsid proteins. This release of E2 C-terminus in cytoplasm occurs lately in protein export, and precludes premature assembly of particles at the endoplasmic reticulum membrane. In terms of biological role, virion component that may play a role during viral assembly. The protein is Frameshifted structural polyprotein of Aedes (Middle-African hedgehog).